The sequence spans 79 residues: Calcium/calmodulin-dependent protein kinase II inhibitor 2 (79 aa).

An inhibitory domain region spans residues 43–69 (KRPPKLGQIGRAKRVVIEDDRIDEVLK).

This sequence belongs to the CAMK2N family.

It localises to the nucleus. The protein localises to the cytoplasm. It is found in the cytosol. Its function is as follows. Potent and specific cellular inhibitor of CaM-kinase II (CAMK2). Traps Ca(2+)/calmodulin on CAMK2. In Xenopus laevis (African clawed frog), this protein is Calcium/calmodulin-dependent protein kinase II inhibitor 2 (camk2n2).